The following is a 105-amino-acid chain: Mitomycin resistance protein McrB (105 aa).

Involved in mitomycin resistance. May operate with McrA or may be a type of transcriptional activator protein. The polypeptide is Mitomycin resistance protein McrB (mcrB) (Streptomyces lavendulae).